A 623-amino-acid chain; its full sequence is Scarecrow-like protein 22 (623 aa).

Disordered regions lie at residues 62–90 and 179–203; these read RSPS…AAAA and PNPG…QPGS. Residues 63-80 are compositionally biased toward low complexity; sequence SPSPFVSSSTTTLSSSHG. One can recognise a GRAS domain in the interval 235-622; that stretch reads NDQDQSAVII…KELVTVSAWK (388 aa). Positions 242–311 are leucine repeat I (LRI); the sequence is VIIDQLFSAA…ALHSLLQDSS (70 aa). Positions 330 to 398 are VHIID; that stretch reads YRAFSETSPF…SSAPSLKITA (69 aa). Positions 361–365 match the VHIID motif; sequence IHIVD. The leucine repeat II (LRII) stretch occupies residues 413 to 448; that stretch reads FTEENLRSFAGETGVSFEIELLNMEILLNPTYWPLS. A PFYRE region spans residues 458–545; it reads IAVNLPISSM…RFCVQPSIQK (88 aa). The tract at residues 548–622 is SAW; it reads TNRYRWMERS…KELVTVSAWK (75 aa).

This sequence belongs to the GRAS family. As to expression, expressed in seedlings, roots, leaves and flowers.

The protein localises to the nucleus. In terms of biological role, probable transcription factor involved in plant development. This is Scarecrow-like protein 22 (SCL22) from Arabidopsis thaliana (Mouse-ear cress).